A 487-amino-acid polypeptide reads, in one-letter code: Lysophospholipid acyltransferase 5 (487 aa).

A2 is subject to N-acetylalanine. Helical transmembrane passes span 44–64 (LIIS…YLFY), 84–104 (FNFG…FLIL), 111–131 (ITAV…GYYY), 180–200 (GVPS…FLVG), 227–247 (IIPA…YTLL), and 285–305 (VTCW…FNGF). Residues N338 and H374 contribute to the active site. 3 helical membrane-spanning segments follow: residues 364-384 (GLSL…LVCF), 422-442 (LVQQ…FCLF), and 453-473 (SIYF…PYIH). Residues 484 to 487 (KKME) carry the Di-lysine motif motif.

Belongs to the membrane-bound acyltransferase family. As to expression, highly expressed in liver, pancreas and adipose tissue. Very low expression in skeletal muscle and heart. Detected in neutrophils.

It is found in the endoplasmic reticulum membrane. It catalyses the reaction a 1-acyl-sn-glycero-3-phosphocholine + an acyl-CoA = a 1,2-diacyl-sn-glycero-3-phosphocholine + CoA. The catalysed reaction is a 1-acyl-sn-glycero-3-phosphoethanolamine + an acyl-CoA = a 1,2-diacyl-sn-glycero-3-phosphoethanolamine + CoA. The enzyme catalyses a 1-acyl-sn-glycero-3-phospho-L-serine + an acyl-CoA = a 1,2-diacyl-sn-glycero-3-phospho-L-serine + CoA. It carries out the reaction (9Z,12Z)-octadecadienoyl-CoA + a 1-acyl-sn-glycero-3-phosphocholine = 1-acyl-2-(9Z,12Z)-octadecadienoyl-sn-glycero-3-phosphocholine + CoA. It catalyses the reaction (5Z,8Z,11Z,14Z)-eicosatetraenoyl-CoA + a 1-acyl-sn-glycero-3-phosphocholine = 1-acyl-2-(5Z,8Z,11Z,14Z-eicosatetraenoyl)-sn-glycero-3-phosphocholine + CoA. The catalysed reaction is dodecanoyl-CoA + 1-hexadecanoyl-sn-glycero-3-phosphocholine = 1-hexadecanoyl-2-dodecanoyl-sn-glycero-3-phosphocholine + CoA. The enzyme catalyses octadecanoyl-CoA + 1-hexadecanoyl-sn-glycero-3-phosphocholine = 1-hexadecanoyl-2-octadecanoyl-sn-glycero-3-phosphocholine + CoA. It carries out the reaction 1-dodecanoyl-sn-glycero-3-phosphocholine + hexadecanoyl-CoA = 1-dodecanoyl-2-hexadecanoyl-sn-glycero-3-phosphocholine + CoA. It catalyses the reaction 1-tetradecanoyl-sn-glycero-3-phosphocholine + hexadecanoyl-CoA = 1-tetradecanoyl-2-hexadecanoyl-sn-glycero-3-phosphocholine + CoA. The catalysed reaction is 1-hexadecanoyl-sn-glycero-3-phosphocholine + hexadecanoyl-CoA = 1,2-dihexadecanoyl-sn-glycero-3-phosphocholine + CoA. The enzyme catalyses 1-octadecanoyl-sn-glycero-3-phosphocholine + hexadecanoyl-CoA = 1-octadecanoyl-2-hexadecanoyl-sn-glycero-3-phosphocholine + CoA. It carries out the reaction 1-(9Z-octadecenoyl)-sn-glycero-3-phosphocholine + hexadecanoyl-CoA = 1-(9Z-octadecenoyl)-2-hexadecanoyl-sn-glycero-3-phosphocholine + CoA. It catalyses the reaction (9Z)-hexadecenoyl-CoA + 1-hexadecanoyl-sn-glycero-3-phosphocholine = 1-hexadecanoyl-2-(9Z-hexadecenoyl)-sn-glycero-3-phosphocholine + CoA. The catalysed reaction is 1-hexadecanoyl-sn-glycero-3-phosphocholine + (9Z)-octadecenoyl-CoA = 1-hexadecanoyl-2-(9Z-octadecenoyl)-sn-glycero-3-phosphocholine + CoA. The enzyme catalyses (9Z,12Z)-octadecadienoyl-CoA + 1-hexadecanoyl-sn-glycero-3-phosphocholine = 1-hexadecanoyl-2-(9Z,12Z-octadecadienoyl)-sn-glycero-3-phosphocholine + CoA. It carries out the reaction 1-dodecanoyl-sn-glycero-3-phosphocholine + (5Z,8Z,11Z,14Z)-eicosatetraenoyl-CoA = 1-dodecanoyl-2-(5Z,8Z,11Z,14Z)-eicosatetraenoyl-sn-glycero-3-phosphocholine + CoA. It catalyses the reaction (5Z,8Z,11Z,14Z)-eicosatetraenoyl-CoA + 1-hexadecanoyl-sn-glycero-3-phosphocholine = 1-hexadecanoyl-2-(5Z,8Z,11Z,14Z-eicosatetraenoyl)-sn-glycero-3-phosphocholine + CoA. The catalysed reaction is 1-octadecanoyl-sn-glycero-3-phosphocholine + (5Z,8Z,11Z,14Z)-eicosatetraenoyl-CoA = 1-octadecanoyl-2-(5Z,8Z,11Z,14Z-eicosatetraenoyl)-sn-glycero-3-phosphocholine + CoA. The enzyme catalyses 1-eicosanoyl-sn-glycero-3-phosphocholine + (5Z,8Z,11Z,14Z)-eicosatetraenoyl-CoA = 1-eicosanoyl-2-(5Z,8Z,11Z,14Z)-eicosatetraenoyl-sn-glycero-3-phosphocholine + CoA. It carries out the reaction 1-(9Z-octadecenoyl)-sn-glycero-3-phosphocholine + (9Z)-octadecenoyl-CoA = 1,2-di-(9Z-octadecenoyl)-sn-glycero-3-phosphocholine + CoA. It catalyses the reaction 1-(9Z-octadecenoyl)-sn-glycero-3-phosphocholine + (9Z,12Z)-octadecadienoyl-CoA = 1-(9Z)-octadecenoyl-2-(9Z,12Z)-octadecadienoyl-sn-glycero-3-phosphocholine + CoA. The catalysed reaction is 1-(9Z-octadecenoyl)-sn-glycero-3-phosphocholine + (5Z,8Z,11Z,14Z)-eicosatetraenoyl-CoA = 1-(9Z)-octadecenoyl-2-(5Z,8Z,11Z,14Z)-icosatetraenoyl-sn-glycero-3-phosphocholine + CoA. The enzyme catalyses a 1-acyl-sn-glycero-3-phosphoethanolamine + (9Z,12Z)-octadecadienoyl-CoA = 1-acyl-2-(9Z,12Z)-octadecadienoyl-sn-glycero-3-phosphoethanolamine + CoA. It carries out the reaction 1-(9Z-octadecenoyl)-sn-glycero-3-phosphoethanolamine + (9Z,12Z)-octadecadienoyl-CoA = 1-(9Z)-octadecenoyl-2-(9Z,12Z)-octadecadienoyl-sn-glycero-3-phosphoethanolamine + CoA. It catalyses the reaction 1-(10Z-heptadecenoyl)-sn-glycero-3-phosphoethanolamine + (9Z,12Z)-octadecadienoyl-CoA = 1-(10Z-heptadecenoyl)-2-(9Z,12Z-octadecadienoyl)-sn-glycero-3-phosphoethanolamine + CoA. The catalysed reaction is a 1-acyl-sn-glycero-3-phosphoethanolamine + (5Z,8Z,11Z,14Z)-eicosatetraenoyl-CoA = 1-acyl-2-(5Z,8Z,11Z,14Z)-eicosatetraenoyl-sn-glycero-3-phosphoethanolamine + CoA. The enzyme catalyses 1-hexadecanoyl-sn-glycero-3-phosphoethanolamine + (5Z,8Z,11Z,14Z)-eicosatetraenoyl-CoA = 1-hexadecanoyl-2-(5Z,8Z,11Z,14Z-eicosatetraenoyl)-sn-glycero-3-phosphoethanolamine + CoA. It carries out the reaction 1-(9Z-octadecenoyl)-sn-glycero-3-phosphoethanolamine + (5Z,8Z,11Z,14Z)-eicosatetraenoyl-CoA = 1-(9Z)-octadecenoyl-2-(5Z,8Z,11Z,14Z)-eicosatetraenoyl-sn-glycero-3-phosphoethanolamine + CoA. It catalyses the reaction 1-(10Z-heptadecenoyl)-sn-glycero-3-phosphoethanolamine + (5Z,8Z,11Z,14Z)-eicosatetraenoyl-CoA = 1-(10Z-heptadecenoyl)-2-(5Z,8Z,11Z,14Z-eicosatetraenoyl)-sn-glycero-3-phosphoethanolamine + CoA. The catalysed reaction is a 1-O-(1Z-alkenyl)-sn-glycero-3-phosphoethanolamine + (5Z,8Z,11Z,14Z)-eicosatetraenoyl-CoA = 1-O-(1Z)-alkenyl-2-(5Z,8Z,11Z,14Z)-eicosatetraenoyl-sn-glycero-3-phosphoethanolamine + CoA. The enzyme catalyses a 1-acyl-sn-glycero-3-phospho-L-serine + (9Z,12Z)-octadecadienoyl-CoA = 1-acyl-2-(9Z,12Z-octadecadienoyl)-sn-glycero-3-phospho-L-serine + CoA. It carries out the reaction a 1-acyl-sn-glycero-3-phospho-L-serine + (5Z,8Z,11Z,14Z)-eicosatetraenoyl-CoA = 1-acyl-2-(5Z,8Z,11Z,14Z-eicosatetraenoyl)-sn-glycero-3-phospho-L-serine + CoA. It catalyses the reaction 1-hexadecanoyl-sn-glycero-3-phospho-L-serine + (9Z)-octadecenoyl-CoA = 1-hexadecanoyl-2-(9Z-octadecenoyl)-sn-glycero-3-phospho-L-serine + CoA. The catalysed reaction is 1-(9Z-octadecenoyl)-sn-glycero-3-phospho-L-serine + (9Z)-octadecenoyl-CoA = 1,2-di-(9Z)-octadecenoyl-sn-glycero-3-phospho-L-serine + CoA. The enzyme catalyses 1-hexadecanoyl-sn-glycero-3-phospho-L-serine + (9Z,12Z)-octadecadienoyl-CoA = 1-hexadecanoyl-2-(9Z,12Z-octadecadienoyl)-sn-glycero-3-phospho-L-serine + CoA. It carries out the reaction 1-(9Z-octadecenoyl)-sn-glycero-3-phospho-L-serine + (9Z,12Z)-octadecadienoyl-CoA = 1-(9Z-octadecenoyl)-2-(9Z,12Z-octadienoyl)-sn-glycero-3-phospho-L-serine + CoA. It catalyses the reaction 1-hexadecanoyl-sn-glycero-3-phospho-L-serine + (5Z,8Z,11Z,14Z)-eicosatetraenoyl-CoA = 1-hexadecanoyl-2-(5Z,8Z,11Z,14Z-eicosatetraenoyl)-sn-glycero-3-phospho-L-serine + CoA. The catalysed reaction is 1-(9Z-octadecenoyl)-sn-glycero-3-phospho-L-serine + (5Z,8Z,11Z,14Z)-eicosatetraenoyl-CoA = 1-(9Z-octadecenoyl)-2-(5Z,8Z,11Z,14Z-eicosatetraenoyl)-sn-glycero-3-phospho-L-serine + CoA. Its pathway is lipid metabolism; phospholipid metabolism. Its activity is regulated as follows. Activity is inhibited by thimerosal. Its function is as follows. Lysophospholipid O-acyltransferase (LPLAT) that catalyzes the reacylation step of the phospholipid remodeling process also known as the Lands cycle. Catalyzes transfer of the fatty acyl chain from fatty acyl-CoA to 1-acyl lysophospholipid to form various classes of phospholipids. Converts 1-acyl lysophosphatidylcholine (LPC) into phosphatidylcholine (PC) (LPCAT activity), 1-acyl lysophosphatidylserine (LPS) into phosphatidylserine (PS) (LPSAT activity) and 1-acyl lysophosphatidylethanolamine (LPE) into phosphatidylethanolamine (PE) (LPEAT activity). Favors polyunsaturated fatty acyl-CoAs as acyl donors compared to saturated fatty acyl-CoAs. Has higher activity for LPC acyl acceptors compared to LPEs and LPSs. Can also transfer the fatty acyl chain from fatty acyl-CoA to 1-O-alkyl lysophospholipid or 1-O-alkenyl lysophospholipid with lower efficiency. Acts as a major LPC O-acyltransferase in liver and intestine. As a component of the liver X receptor/NR1H3 or NR1H2 signaling pathway, mainly catalyzes the incorporation of arachidonate into PCs of endoplasmic reticulum (ER) membranes, increasing membrane dynamics and enabling triacylglycerols transfer to nascent very low-density lipoprotein (VLDL) particles. Promotes processing of sterol regulatory protein SREBF1 in hepatocytes, likely by facilitating the translocation of SREBF1-SCAP complex from ER to the Golgi apparatus. Participates in mechanisms by which the liver X receptor/NR1H3 or NR1H2 signaling pathway counteracts lipid-induced ER stress response and inflammation. Down-regulates hepatic inflammation by limiting arachidonic acid availability for synthesis of inflammatory eicosanoids, such as prostaglandins. In enterocytes, acts as a component of a gut-brain feedback loop that coordinates dietary lipid absorption and food intake. Regulates the abundance of PCs containing linoleate and arachidonate in enterocyte membranes, enabling passive diffusion of fatty acids and cholesterol across the membrane for efficient chylomicron assembly. In the intestinal crypt, acts as a component of dietary-responsive phospholipid-cholesterol axis, regulating the biosynthesis of cholesterol and its mitogenic effects on intestinal stem cells. The protein is Lysophospholipid acyltransferase 5 (LPCAT3) of Homo sapiens (Human).